Consider the following 368-residue polypeptide: 4-hydroxy-3-methylbut-2-en-1-yl diphosphate synthase (flavodoxin) (368 aa).

Positions 271, 274, 306, and 313 each coordinate [4Fe-4S] cluster.

This sequence belongs to the IspG family. Requires [4Fe-4S] cluster as cofactor.

The catalysed reaction is (2E)-4-hydroxy-3-methylbut-2-enyl diphosphate + oxidized [flavodoxin] + H2O + 2 H(+) = 2-C-methyl-D-erythritol 2,4-cyclic diphosphate + reduced [flavodoxin]. It participates in isoprenoid biosynthesis; isopentenyl diphosphate biosynthesis via DXP pathway; isopentenyl diphosphate from 1-deoxy-D-xylulose 5-phosphate: step 5/6. Converts 2C-methyl-D-erythritol 2,4-cyclodiphosphate (ME-2,4cPP) into 1-hydroxy-2-methyl-2-(E)-butenyl 4-diphosphate. In Buchnera aphidicola subsp. Acyrthosiphon pisum (strain APS) (Acyrthosiphon pisum symbiotic bacterium), this protein is 4-hydroxy-3-methylbut-2-en-1-yl diphosphate synthase (flavodoxin).